A 368-amino-acid chain; its full sequence is MPRPIQAVIHQPALANNLEVVRRQAPASRIWAVVKANAYGHGIRRVFAGLKAADGFGLLDLSEAVLLRDLGWQGPILLLEGIFQAQDVPLLEQYRLTTAVHCEEQLRMLELARPKGPLAIQLKLNTGMNRLGFRPAQYRAAWERARTMSCIGSIVHMTHFSDADSKRGIAHQVEAFEAATANLPGEVSMANSAAVLWHPQAHRNWVRPGIILYGGSPTGVSSDIAETGLQPAMSLHSELIGIQDLQPGDTVGYGSMFTADRAMRVGVVACGYADGYPRHAVGWGERRAPVLVDGVRTQLVGRVSMDMICVDLTPCPKAKVGTPVTLWGHGLPIDDVAAASGTVGYELMCALAPRVPTSVATLTTADAV.

The Proton acceptor; specific for D-alanine role is filled by K35. K35 is modified (N6-(pyridoxal phosphate)lysine). R130 contacts substrate. Y253 acts as the Proton acceptor; specific for L-alanine in catalysis. Position 305 (M305) interacts with substrate.

It belongs to the alanine racemase family. Pyridoxal 5'-phosphate is required as a cofactor.

The enzyme catalyses L-alanine = D-alanine. Its pathway is amino-acid biosynthesis; D-alanine biosynthesis; D-alanine from L-alanine: step 1/1. Functionally, catalyzes the interconversion of L-alanine and D-alanine. May also act on other amino acids. The protein is Alanine racemase (alr) of Cupriavidus metallidurans (strain ATCC 43123 / DSM 2839 / NBRC 102507 / CH34) (Ralstonia metallidurans).